The chain runs to 306 residues: Esterase tropF (306 aa).

Residues serine 147, aspartate 248, and histidine 276 each act as charge relay system in the active site.

Belongs to the LovG family.

The protein operates within secondary metabolite biosynthesis. Its function is as follows. Esterase; part of the gene cluster that mediates the biosynthesis of the tropolone class of fungal maleic anhydrides. The pathway begins with the synthesis of 3-methylorcinaldehyde by the non-reducing polyketide synthase (PKS) tropA. 3-methylorcinaldehyde is the substrate for the FAD-dependent monooxygenase tropB to yield a dearomatized hydroxycyclohexadione. The 2-oxoglutarate-dependent dioxygenase tropC then performs the oxidative ring expansion to provide the first tropolone metabolite stipitaldehyde. Trop D converts stipitaldehyde into stipitacetal which is in turn converted to stipitalide by the short-chain dehydrogenase/reductase tropE. The next steps involve tropF, tropG, tropH, tropI and tropJ to form successive tropolone maleic anhydrides including stipitaldehydic, stipitatonic and stipitatic acids. The protein is Esterase tropF of Talaromyces stipitatus (strain ATCC 10500 / CBS 375.48 / QM 6759 / NRRL 1006) (Penicillium stipitatum).